The chain runs to 332 residues: Cyclin-D1-binding protein 1 (332 aa).

Ala2 bears the N-acetylalanine mark. Interaction with TCF3 regions lie at residues 2 to 184 and 150 to 332; these read ASAT…VDFV and ISYN…CLLD. Interaction with RPLP0 regions lie at residues 2–190 and 240–332; these read ASAT…AHEE and LIIP…CLLD. Residues 2–208 are required for interaction with CCND1; that stretch reads ASATAPAAAA…DPYSGLLNDT (207 aa).

This sequence belongs to the CCNDBP1 family. In terms of assembly, interacts with CCND1 and GRAP2. May also interact with COPS5, RPLP0, SIRT6, SYF2 and TCF3. Post-translationally, phosphorylated.

It localises to the cytoplasm. The protein localises to the nucleus. Its function is as follows. May negatively regulate cell cycle progression. May act at least in part via inhibition of the cyclin-D1/CDK4 complex, thereby preventing phosphorylation of RB1 and blocking E2F-dependent transcription. The chain is Cyclin-D1-binding protein 1 (CCNDBP1) from Macaca fascicularis (Crab-eating macaque).